The primary structure comprises 246 residues: Putative outer membrane protein YiaT (246 aa).

An N-terminal signal peptide occupies residues 1–21 (MLINRNIVALFALPFMASATA).

The protein belongs to the MipA/OmpV family.

It is found in the cell outer membrane. The protein is Putative outer membrane protein YiaT (yiaT) of Escherichia coli O157:H7.